The primary structure comprises 460 residues: MSSGRIVQIIGAVIDVEFPREAVPKVYDALSVDGTETTLEVQQQLGDGVVRTIAMGSTEGLKRGLGVTDNGEPIQVPVGTKTLGRIMDVLGRPIDEAGPIGEEERMPIHRAAPTYADQAATNELLETGIKVIDLVCPFAKGGKVGLFGGAGVGKTVNMMELIRNIAIEHSGFSVFAGVGERTREGNDFYHEMKDSNVLDKVSLVYGQMNEPPGNRLRVALTGLTMAEKFRDEGRDVLFFVDNIYRYTLAGTEVSALLGRMPSAVGYQPTLAEEMGVLQERITSTKTGSITSVQAVYVPADDLTDPSPATTFAHLDSTVSLSRDIASKGIYPAIDPLDSTSRQLDPLVIGQEHYDIARGVQTVLQRFKELKDIIAILGMDELSEDDKLIVSRARKIERYLSQPFFVAEVFTGSPGKYVSLKDTLAGFKGILGGDYDHIPEQDFYMKGSIDEVIEAYNKRSK.

Residue 148 to 155 participates in ATP binding; it reads GGAGVGKT.

Belongs to the ATPase alpha/beta chains family. In terms of assembly, F-type ATPases have 2 components, CF(1) - the catalytic core - and CF(0) - the membrane proton channel. CF(1) has five subunits: alpha(3), beta(3), gamma(1), delta(1), epsilon(1). CF(0) has three main subunits: a(1), b(2) and c(9-12). The alpha and beta chains form an alternating ring which encloses part of the gamma chain. CF(1) is attached to CF(0) by a central stalk formed by the gamma and epsilon chains, while a peripheral stalk is formed by the delta and b chains.

Its subcellular location is the cell inner membrane. It catalyses the reaction ATP + H2O + 4 H(+)(in) = ADP + phosphate + 5 H(+)(out). Functionally, produces ATP from ADP in the presence of a proton gradient across the membrane. The catalytic sites are hosted primarily by the beta subunits. The chain is ATP synthase subunit beta from Alcanivorax borkumensis (strain ATCC 700651 / DSM 11573 / NCIMB 13689 / SK2).